Here is a 440-residue protein sequence, read N- to C-terminus: Light-independent protochlorophyllide reductase subunit N (440 aa).

Residues C15, C40, and C99 each contribute to the [4Fe-4S] cluster site.

Belongs to the BchN/ChlN family. As to quaternary structure, protochlorophyllide reductase is composed of three subunits; BchL, BchN and BchB. Forms a heterotetramer of two BchB and two BchN subunits. [4Fe-4S] cluster serves as cofactor.

The catalysed reaction is chlorophyllide a + oxidized 2[4Fe-4S]-[ferredoxin] + 2 ADP + 2 phosphate = protochlorophyllide a + reduced 2[4Fe-4S]-[ferredoxin] + 2 ATP + 2 H2O. It functions in the pathway porphyrin-containing compound metabolism; bacteriochlorophyll biosynthesis (light-independent). Component of the dark-operative protochlorophyllide reductase (DPOR) that uses Mg-ATP and reduced ferredoxin to reduce ring D of protochlorophyllide (Pchlide) to form chlorophyllide a (Chlide). This reaction is light-independent. The NB-protein (BchN-BchB) is the catalytic component of the complex. The polypeptide is Light-independent protochlorophyllide reductase subunit N (Heliobacterium mobile (Heliobacillus mobilis)).